The following is a 152-amino-acid chain: Aspartate 1-decarboxylase (152 aa).

Ser24 serves as the catalytic Schiff-base intermediate with substrate; via pyruvic acid. Ser24 is subject to Pyruvic acid (Ser). Thr56 provides a ligand contact to substrate. The active-site Proton donor is the Tyr57. 72 to 74 (GAA) serves as a coordination point for substrate.

The protein belongs to the PanD family. As to quaternary structure, heterooctamer of four alpha and four beta subunits. Pyruvate is required as a cofactor. Post-translationally, is synthesized initially as an inactive proenzyme, which is activated by self-cleavage at a specific serine bond to produce a beta-subunit with a hydroxyl group at its C-terminus and an alpha-subunit with a pyruvoyl group at its N-terminus.

It localises to the cytoplasm. The catalysed reaction is L-aspartate + H(+) = beta-alanine + CO2. Its pathway is cofactor biosynthesis; (R)-pantothenate biosynthesis; beta-alanine from L-aspartate: step 1/1. Its function is as follows. Catalyzes the pyruvoyl-dependent decarboxylation of aspartate to produce beta-alanine. This Methylobacterium nodulans (strain LMG 21967 / CNCM I-2342 / ORS 2060) protein is Aspartate 1-decarboxylase.